Consider the following 279-residue polypeptide: 2'-N-acetylparomamine deacetylase (279 aa).

Positions 31, 34, and 157 each coordinate Zn(2+). A disordered region spans residues 245 to 279; the sequence is PRRWTGGTAGAGHAAGRRGAPHTERVWTPAPAGAR. Low complexity predominate over residues 246–258; it reads RRWTGGTAGAGHA.

Belongs to the PIGL family. It depends on Zn(2+) as a cofactor.

It carries out the reaction 2'-N-acetylparomamine + H2O = paromamine + acetate. The enzyme catalyses 2'''-acetyl-6'''-hydroxyneomycin C + H2O = 6'''-deamino-6'''-hydroxyneomycin C + acetate. It functions in the pathway antibiotic biosynthesis; neomycin biosynthesis. Its function is as follows. Deacetylase involved in the biosynthesis of neomycin by mediating 2 steps of the pathway. Deacetylates both 2'-N-acetylparomamine and 2'''-acetyl-6'''-hydroxyneomycin C. In Streptomyces fradiae (Streptomyces roseoflavus), this protein is 2'-N-acetylparomamine deacetylase (neoL).